The sequence spans 309 residues: Protein FdhE (309 aa).

Belongs to the FdhE family.

It localises to the cytoplasm. Functionally, necessary for formate dehydrogenase activity. The protein is Protein FdhE of Salmonella choleraesuis (strain SC-B67).